Consider the following 251-residue polypeptide: Triosephosphate isomerase (251 aa).

Residue N10 to K12 coordinates substrate. H98 (electrophile) is an active-site residue. E169 functions as the Proton acceptor in the catalytic mechanism. Residues G175, S213, and G234–G235 contribute to the substrate site.

The protein belongs to the triosephosphate isomerase family. Homodimer.

It is found in the cytoplasm. It carries out the reaction D-glyceraldehyde 3-phosphate = dihydroxyacetone phosphate. Its pathway is carbohydrate biosynthesis; gluconeogenesis. The protein operates within carbohydrate degradation; glycolysis; D-glyceraldehyde 3-phosphate from glycerone phosphate: step 1/1. Its function is as follows. Involved in the gluconeogenesis. Catalyzes stereospecifically the conversion of dihydroxyacetone phosphate (DHAP) to D-glyceraldehyde-3-phosphate (G3P). The sequence is that of Triosephosphate isomerase from Paracidovorax citrulli (strain AAC00-1) (Acidovorax citrulli).